The sequence spans 320 residues: Arabinan endo-1,5-alpha-L-arabinosidase C (320 aa).

A signal peptide spans 1–15 (MKLALSLFLLSGSLA). The active-site Proton acceptor is the Asp-31. Asn-126 and Asn-190 each carry an N-linked (GlcNAc...) asparagine glycan. The Proton donor role is filled by Glu-198.

The protein belongs to the glycosyl hydrolase 43 family.

The protein localises to the secreted. It catalyses the reaction Endohydrolysis of (1-&gt;5)-alpha-arabinofuranosidic linkages in (1-&gt;5)-arabinans.. Its pathway is glycan metabolism; L-arabinan degradation. Its function is as follows. Endo-1,5-alpha-L-arabinanase involved in degradation of pectin. Its preferred substrate is linear 1,5-alpha-L-arabinan. This chain is Arabinan endo-1,5-alpha-L-arabinosidase C (abnC), found in Emericella nidulans (strain FGSC A4 / ATCC 38163 / CBS 112.46 / NRRL 194 / M139) (Aspergillus nidulans).